Reading from the N-terminus, the 266-residue chain is Imidazole glycerol phosphate synthase subunit HisF (266 aa).

Residues D11 and D130 contribute to the active site.

The protein belongs to the HisA/HisF family. As to quaternary structure, heterodimer of HisH and HisF.

The protein localises to the cytoplasm. The enzyme catalyses 5-[(5-phospho-1-deoxy-D-ribulos-1-ylimino)methylamino]-1-(5-phospho-beta-D-ribosyl)imidazole-4-carboxamide + L-glutamine = D-erythro-1-(imidazol-4-yl)glycerol 3-phosphate + 5-amino-1-(5-phospho-beta-D-ribosyl)imidazole-4-carboxamide + L-glutamate + H(+). The protein operates within amino-acid biosynthesis; L-histidine biosynthesis; L-histidine from 5-phospho-alpha-D-ribose 1-diphosphate: step 5/9. Its function is as follows. IGPS catalyzes the conversion of PRFAR and glutamine to IGP, AICAR and glutamate. The HisF subunit catalyzes the cyclization activity that produces IGP and AICAR from PRFAR using the ammonia provided by the HisH subunit. The protein is Imidazole glycerol phosphate synthase subunit HisF of Albidiferax ferrireducens (strain ATCC BAA-621 / DSM 15236 / T118) (Rhodoferax ferrireducens).